The sequence spans 256 residues: Ribonuclease 3-like protein 1 (256 aa).

The RNase III domain maps to 22–168 (AEVERALGGY…IVGAVYLDSK (147 aa)). 3 residues coordinate Mg(2+): Glu65, Asp154, and Glu157.

Mg(2+) is required as a cofactor. Mn(2+) serves as cofactor.

Cleaves double-stranded RNA (dsRNA). This chain is Ribonuclease 3-like protein 1, found in Oryza sativa subsp. japonica (Rice).